Here is a 141-residue protein sequence, read N- to C-terminus: Hemoglobin subunit alpha (141 aa).

Positions 1–141 constitute a Globin domain; that stretch reads VLSPADKTNI…VSTVLVSKYR (141 aa). The residue at position 3 (S3) is a Phosphoserine. An N6-succinyllysine modification is found at K7. T8 carries the phosphothreonine modification. Position 11 is an N6-succinyllysine (K11). At K16 the chain carries N6-acetyllysine; alternate. K16 carries the N6-succinyllysine; alternate modification. Position 24 is a phosphotyrosine (Y24). S35 carries the post-translational modification Phosphoserine. K40 bears the N6-succinyllysine mark. S49 is subject to Phosphoserine. O2 is bound at residue H58. H87 contacts heme b. The residue at position 102 (S102) is a Phosphoserine. The residue at position 108 (T108) is a Phosphothreonine. 2 positions are modified to phosphoserine: S124 and S131. The residue at position 134 (T134) is a Phosphothreonine. S138 is modified (phosphoserine).

This sequence belongs to the globin family. As to quaternary structure, heterotetramer of two alpha chains and two beta chains. As to expression, red blood cells.

Its function is as follows. Involved in oxygen transport from the lung to the various peripheral tissues. Hemopressin acts as an antagonist peptide of the cannabinoid receptor CNR1. Hemopressin-binding efficiently blocks cannabinoid receptor CNR1 and subsequent signaling. This chain is Hemoglobin subunit alpha (HBA), found in Myotis velifer (Mouse-eared bat).